We begin with the raw amino-acid sequence, 354 residues long: 3'-hydroxy-N-methyl-(S)-coclaurine 4'-O-methyltransferase 1 (354 aa).

Asp223 provides a ligand contact to S-adenosyl-L-methionine. The active-site Proton acceptor is His261.

Belongs to the class I-like SAM-binding methyltransferase superfamily. Cation-independent O-methyltransferase family. COMT subfamily. As to expression, expressed in roots, stems, leaves and flowers. Restricted to sieve elements of the phloem adjacent or proximal to laticifers.

The catalysed reaction is (S)-3'-hydroxy-N-methylcoclaurine + S-adenosyl-L-methionine = (S)-reticuline + S-adenosyl-L-homocysteine + H(+). It participates in alkaloid biosynthesis; (S)-reticuline biosynthesis; (S)-reticuline from (S)-norcoclaurine: step 4/4. Its function is as follows. Involved in the biosynthesis of benzylisoquinoline alkaloids. Catalyzes the transfer of the methyl group to the 4'-hydroxyl group of 3'-hydroxy-N-methylcoclaurine to form reticuline. Also involved in the papaverine biosynthesis. This is 3'-hydroxy-N-methyl-(S)-coclaurine 4'-O-methyltransferase 1 from Papaver somniferum (Opium poppy).